Consider the following 778-residue polypeptide: Ribosome biogenesis protein BOP1 homolog (778 aa).

Over residues 1–10 (MAKKQDRKRK) the composition is skewed to basic residues. The tract at residues 1–152 (MAKKQDRKRK…DSDTSDEEDI (152 aa)) is disordered. Composition is skewed to acidic residues over residues 44-53 (EDSTDDEGID), 60-72 (SSEDLEFESDEEG), and 84-105 (SSDEEEVDEEEEDDDDDDDEEE). Polar residues predominate over residues 114 to 124 (TTSSKAETNNE). Acidic residues predominate over residues 142 to 151 (EDSDTSDEED). WD repeat units lie at residues 438–479 (GHTD…RTIE), 481–519 (EDVVRCVAWCPNAKLSIIAVATGSRLLLVNPKVGDKLLI), 564–606 (NHFK…SQIP), 609–647 (KSKGLIQCVLFHPVKPCFFVATQHNIRIYDLVKQELIKK), 650–689 (TNSKWISGMSIHPKGDNLLVSTYDKKMLWFDLDLSTKPYQ), 693–732 (LHRNAVRSVAFHLRYPLFASGSDDQAVIVSHGMVYNDLLQ), and 748–778 (RDDFGVLDVCWHPVQPWVFSTGADCTIRLYT).

Belongs to the WD repeat BOP1/ERB1 family.

It is found in the nucleus. The protein resides in the nucleolus. Its subcellular location is the nucleoplasm. Functionally, required for maturation of ribosomal RNAs and formation of the large ribosomal subunit. This Drosophila willistoni (Fruit fly) protein is Ribosome biogenesis protein BOP1 homolog.